Reading from the N-terminus, the 565-residue chain is Sulfite reductase [NADPH] hemoprotein beta-component (565 aa).

The [4Fe-4S] cluster site is built by Cys429, Cys435, Cys474, and Cys478. Cys478 lines the siroheme pocket.

The protein belongs to the nitrite and sulfite reductase 4Fe-4S domain family. In terms of assembly, alpha(8)-beta(8). The alpha component is a flavoprotein, the beta component is a hemoprotein. Requires siroheme as cofactor. It depends on [4Fe-4S] cluster as a cofactor.

The catalysed reaction is hydrogen sulfide + 3 NADP(+) + 3 H2O = sulfite + 3 NADPH + 4 H(+). Its pathway is sulfur metabolism; hydrogen sulfide biosynthesis; hydrogen sulfide from sulfite (NADPH route): step 1/1. Its function is as follows. Component of the sulfite reductase complex that catalyzes the 6-electron reduction of sulfite to sulfide. This is one of several activities required for the biosynthesis of L-cysteine from sulfate. This is Sulfite reductase [NADPH] hemoprotein beta-component from Shewanella putrefaciens (strain CN-32 / ATCC BAA-453).